We begin with the raw amino-acid sequence, 35 residues long: Manganese peroxidase (35 aa).

A compositionally biased stretch (basic and acidic residues) spans 1–11; sequence LSLLGHDERVT. The segment at 1 to 35 is disordered; that stretch reads LSLLGHDERVTPEPFDSVTAQNARGNQADVQSLPR. Residues 18-35 are compositionally biased toward polar residues; that stretch reads VTAQNARGNQADVQSLPR.

Belongs to the peroxidase family. The cofactor is heme b. It depends on Ca(2+) as a cofactor.

It catalyses the reaction 2 Mn(2+) + H2O2 + 2 H(+) = 2 Mn(3+) + 2 H2O. Its function is as follows. Has manganese peroxidase activity. The chain is Manganese peroxidase from Irpex lacteus (Milk-white toothed polypore).